The primary structure comprises 438 residues: Minor capsid protein p49 (438 aa).

Residues 134–167 (PQVSGLKDTQKNCLTQPSSLPSLKNPKNSSVPST) form a disordered region. Over residues 144-167 (KNCLTQPSSLPSLKNPKNSSVPST) the composition is skewed to polar residues.

It belongs to the asfivirus p49 structural protein family.

The protein localises to the virion. Functionally, together with the penton and the other minor capsid proteins (M1249L, p17), forms a complicated network immediately below the outer capsid shell, stabilizing the whole capsid. Plays an essential role in the formation of infectious virus particles. Especially required for the formation of the capsid vertices. During virion assembly, associates with the membrane and probably mediates the docking of the penton complex to the inner membrane, where it recruits the capsomers to form the penton core. In Ornithodoros (relapsing fever ticks), this protein is Minor capsid protein p49.